A 252-amino-acid chain; its full sequence is N-glycosylase/DNA lyase (252 aa).

3 residues coordinate 8-oxoguanine: glutamine 32, serine 60, and tryptophan 71. Residues lysine 129–leucine 193 form a helix-hairpin-helix region. Catalysis depends on lysine 153, which acts as the Schiff-base intermediate with DNA. Phenylalanine 157 and proline 183 together coordinate 8-oxoguanine. The active site involves aspartate 185. Residues aspartate 219 and tryptophan 223 each coordinate 8-oxoguanine.

This sequence belongs to the archaeal N-glycosylase/DNA lyase (AGOG) family.

The enzyme catalyses 2'-deoxyribonucleotide-(2'-deoxyribose 5'-phosphate)-2'-deoxyribonucleotide-DNA = a 3'-end 2'-deoxyribonucleotide-(2,3-dehydro-2,3-deoxyribose 5'-phosphate)-DNA + a 5'-end 5'-phospho-2'-deoxyribonucleoside-DNA + H(+). In terms of biological role, DNA repair enzyme that is part of the base excision repair (BER) pathway; protects from oxidative damage by removing the major product of DNA oxidation, 8-oxoguanine (GO), from single- and double-stranded DNA substrates. The polypeptide is N-glycosylase/DNA lyase (Methanococcus maripaludis (strain DSM 14266 / JCM 13030 / NBRC 101832 / S2 / LL)).